The primary structure comprises 231 residues: 5'-methylthioadenosine/S-adenosylhomocysteine nucleosidase (231 aa).

Catalysis depends on Glu12, which acts as the Proton acceptor. Substrate contacts are provided by residues Gly78, Met153, and 174-175; that span reads ME. Asp198 functions as the Proton donor in the catalytic mechanism.

Belongs to the PNP/UDP phosphorylase family. MtnN subfamily.

It carries out the reaction S-adenosyl-L-homocysteine + H2O = S-(5-deoxy-D-ribos-5-yl)-L-homocysteine + adenine. The enzyme catalyses S-methyl-5'-thioadenosine + H2O = 5-(methylsulfanyl)-D-ribose + adenine. It catalyses the reaction 5'-deoxyadenosine + H2O = 5-deoxy-D-ribose + adenine. The protein operates within amino-acid biosynthesis; L-methionine biosynthesis via salvage pathway; S-methyl-5-thio-alpha-D-ribose 1-phosphate from S-methyl-5'-thioadenosine (hydrolase route): step 1/2. Functionally, catalyzes the irreversible cleavage of the glycosidic bond in both 5'-methylthioadenosine (MTA) and S-adenosylhomocysteine (SAH/AdoHcy) to adenine and the corresponding thioribose, 5'-methylthioribose and S-ribosylhomocysteine, respectively. Also cleaves 5'-deoxyadenosine, a toxic by-product of radical S-adenosylmethionine (SAM) enzymes, into 5-deoxyribose and adenine. The protein is 5'-methylthioadenosine/S-adenosylhomocysteine nucleosidase of Bacillus licheniformis (strain ATCC 14580 / DSM 13 / JCM 2505 / CCUG 7422 / NBRC 12200 / NCIMB 9375 / NCTC 10341 / NRRL NRS-1264 / Gibson 46).